The primary structure comprises 177 residues: Large ribosomal subunit protein uL6 (177 aa).

The protein belongs to the universal ribosomal protein uL6 family. In terms of assembly, part of the 50S ribosomal subunit.

Functionally, this protein binds to the 23S rRNA, and is important in its secondary structure. It is located near the subunit interface in the base of the L7/L12 stalk, and near the tRNA binding site of the peptidyltransferase center. This Methanocella arvoryzae (strain DSM 22066 / NBRC 105507 / MRE50) protein is Large ribosomal subunit protein uL6.